The following is a 284-amino-acid chain: 4-diphosphocytidyl-2-C-methyl-D-erythritol kinase (284 aa).

Residue Lys17 is part of the active site. An ATP-binding site is contributed by 100–110 (PMGGGLGGGSS). The active site involves Asp142.

This sequence belongs to the GHMP kinase family. IspE subfamily.

The enzyme catalyses 4-CDP-2-C-methyl-D-erythritol + ATP = 4-CDP-2-C-methyl-D-erythritol 2-phosphate + ADP + H(+). It functions in the pathway isoprenoid biosynthesis; isopentenyl diphosphate biosynthesis via DXP pathway; isopentenyl diphosphate from 1-deoxy-D-xylulose 5-phosphate: step 3/6. Catalyzes the phosphorylation of the position 2 hydroxy group of 4-diphosphocytidyl-2C-methyl-D-erythritol. The polypeptide is 4-diphosphocytidyl-2-C-methyl-D-erythritol kinase (Aromatoleum aromaticum (strain DSM 19018 / LMG 30748 / EbN1) (Azoarcus sp. (strain EbN1))).